Reading from the N-terminus, the 327-residue chain is Zinc finger C2HC domain-containing protein 1A (327 aa).

The C2HC/C3H-type 1 zinc finger occupies 13–42 (ELVPCKICGRSFFPKVLKKHVPICQKTAAK). Residues C17, C20, H32, and C36 each contribute to the Zn(2+) site. Disordered stretches follow at residues 40–96 (AAKR…KHEE) and 108–131 (NQVIKDGGPLPPPPPPSYDPDYIQ). Residues 46–56 (VFDSGRQRAEG) are compositionally biased toward basic and acidic residues. The span at 63–76 (KPIKPKLQSSSSSS) shows a compositional bias: low complexity. A compositionally biased stretch (pro residues) spans 116-125 (PLPPPPPPSY). A C2HC/C3H-type 2 zinc finger spans residues 128–157 (DYIQCPYCQRRFGENAADRHIKFCKEQASR). The Zn(2+) site is built by C132, C135, H147, and C151. A disordered region spans residues 154 to 271 (QASRISNKSK…NPSTGIGMNK (118 aa)). Positions 187–199 (NSPTASSVSSRLP) are enriched in polar residues. Over residues 211–229 (GIPSSKPSSTGSIKSTPSG) the composition is skewed to low complexity. Polar residues-rich tracts occupy residues 233–245 (LRNNSSSLTSPPS) and 255–267 (VSQSSLRNPSTGI).

It belongs to the ZC2HC1 family. It depends on Zn(2+) as a cofactor.

The sequence is that of Zinc finger C2HC domain-containing protein 1A (zc2hc1a) from Danio rerio (Zebrafish).